Here is a 183-residue protein sequence, read N- to C-terminus: Proton-transporting V-type ATPase complex assembly regulator TMEM9 (183 aa).

A signal peptide spans 1 to 20 (MKLLSLVAVVGCLLVPPAEA). Residues asparagine 21, asparagine 38, and asparagine 47 are each glycosylated (N-linked (GlcNAc...) asparagine). At 21 to 89 (NKSSEDIRCK…YEERSTTTIK (69 aa)) the chain is on the extracellular side. Residues 90 to 110 (VIIVIYLSVVGALLLYMAFLM) traverse the membrane as a helical segment. Over 111-183 (LVDPLIRKPD…TVFDRHKMLS (73 aa)) the chain is Cytoplasmic. A phosphoserine mark is found at serine 137 and serine 144.

Belongs to the TMEM9 family. Interacts with the v-ATPase accessory protein ATP6AP2 and with the v-ATPase complex subunit ATP6V0D1; these interactions lead to the assembly of the v-ATPase complex. In terms of processing, N-glycosylated. In terms of tissue distribution, highly expressed in adrenal gland, thyroid gland, testis, ovary and prostate. Moderate expression in trachea, spinal cord, stomach, colon, small intestine and spleen. Low expression in bone marrow, lymph node, thymus and peripheral blood lymphocytes. Expression is detected in hematopoietic cell lines including those of myeloid, erythroid, B- and T-cell origin.

It localises to the lysosome membrane. The protein resides in the late endosome membrane. Its subcellular location is the endosome. The protein localises to the multivesicular body membrane. Functionally, transmembrane protein that binds to and facilitates the assembly of lysosomal proton-transporting V-type ATPase (v-ATPase), resulting in enhanced lysosomal acidification and trafficking. By bringing the v-ATPase accessory protein ATP6AP2 and the v-ATPase subunit ATP6V0D1 together, allows v-ATPase complex formation and activation. TMEM9-controlled vesicular acidification induces hyperactivation of Wnt/beta-catenin signaling, involved in development, tissue homeostasis and tissue regeneration, through lysosomal degradation of adenomatous polyposis coli/APC. In the liver, involved in hepatic regeneration. This is Proton-transporting V-type ATPase complex assembly regulator TMEM9 from Homo sapiens (Human).